Reading from the N-terminus, the 89-residue chain is Cell division topological specificity factor (89 aa).

It belongs to the MinE family.

Prevents the cell division inhibition by proteins MinC and MinD at internal division sites while permitting inhibition at polar sites. This ensures cell division at the proper site by restricting the formation of a division septum at the midpoint of the long axis of the cell. The sequence is that of Cell division topological specificity factor from Clostridium beijerinckii (strain ATCC 51743 / NCIMB 8052) (Clostridium acetobutylicum).